We begin with the raw amino-acid sequence, 317 residues long: N-acetyl-gamma-glutamyl-phosphate reductase (317 aa).

C136 is a catalytic residue.

This sequence belongs to the NAGSA dehydrogenase family. Type 1 subfamily.

The protein localises to the cytoplasm. The enzyme catalyses N-acetyl-L-glutamate 5-semialdehyde + phosphate + NADP(+) = N-acetyl-L-glutamyl 5-phosphate + NADPH + H(+). The protein operates within amino-acid biosynthesis; L-arginine biosynthesis; N(2)-acetyl-L-ornithine from L-glutamate: step 3/4. Its function is as follows. Catalyzes the NADPH-dependent reduction of N-acetyl-5-glutamyl phosphate to yield N-acetyl-L-glutamate 5-semialdehyde. The sequence is that of N-acetyl-gamma-glutamyl-phosphate reductase from Stenotrophomonas maltophilia (strain R551-3).